A 794-amino-acid chain; its full sequence is Cadherin-12 (794 aa).

The first 23 residues, 1–23, serve as a signal peptide directing secretion; the sequence is MLTRNCLSLLLWVLFDGGLLTPL. Positions 24–54 are excised as a propeptide; the sequence is QPQPQQTLATEPRENVIHLPGQRSHFQRVKR. Cadherin domains lie at 55 to 160, 161 to 269, 270 to 384, 385 to 487, and 488 to 609; these read GWVW…EPKF, LDGP…PPRF, PKSI…PPVF, SKPL…EFPP, and EISV…IFLP. Residues 55–609 lie on the Extracellular side of the membrane; it reads GWVWNQFFVL…SCNVEAIFLP (555 aa). The N-linked (GlcNAc...) asparagine glycan is linked to N256. N456, N537, and N545 each carry an N-linked (GlcNAc...) asparagine glycan. The helical transmembrane segment at 610–637 threads the bilayer; sequence VGLSTGALIAILLCIVILLAIVVLYVAL. Topologically, residues 638 to 794 are cytoplasmic; it reads RRQKKKDTLM…EESYNPDKVT (157 aa). At S787 the chain carries Phosphoserine.

As to expression, brain.

It is found in the cell membrane. Its function is as follows. Cadherins are calcium-dependent cell adhesion proteins. They preferentially interact with themselves in a homophilic manner in connecting cells; cadherins may thus contribute to the sorting of heterogeneous cell types. This Homo sapiens (Human) protein is Cadherin-12 (CDH12).